The following is a 313-amino-acid chain: Pyrimidine-specific ribonucleoside hydrolase RihB (313 aa).

Asp-11 functions as the Proton acceptor in the catalytic mechanism. Ca(2+) is bound by residues Asp-11, Asp-16, and Val-124. Residues Gln-227 and His-239 each contribute to the substrate site. Residue Asp-240 participates in Ca(2+) binding.

The protein belongs to the IUNH family. RihB subfamily. Homotetramer. Ca(2+) serves as cofactor.

The enzyme catalyses a pyrimidine ribonucleoside + H2O = a pyrimidine nucleobase + D-ribose. Its function is as follows. Hydrolyzes cytidine or uridine to ribose and cytosine or uracil, respectively. Has a clear preference for cytidine over uridine. Strictly specific for ribonucleosides. The polypeptide is Pyrimidine-specific ribonucleoside hydrolase RihB (Shigella sonnei (strain Ss046)).